A 559-amino-acid chain; its full sequence is Potassium-transporting ATPase potassium-binding subunit (559 aa).

The next 13 helical transmembrane spans lie at 5–25, 27–47, 63–83, 132–152, 170–190, 253–273, 283–303, 327–347, 356–376, 379–399, 416–436, 484–504, and 524–544; these read GFLLIASFLLILLVLAKPLGS, LARLIAAVPLPGVAGIERILW, LLALLTLNLLGLGILFCLLFW, GLTVQNFLSAATGIAVVFALI, LVRITLWILFPVALIIALFFI, LAQMLAIFLIPAALCFAFGEA, LLWAMSFIFVVCVAVVMWAEV, FGVLASSLFAVVTTAASCGAV, ALGGMVPMWLMQIGEVVFGGV, GLYGMLLFVLLAVFIAGLMIG, MTALAILVTPMLVLLGSALAM, LLAFCMFVGRFGVIIPVMAIA, and GALFIGLLIGTVLLVGALTFI.

The protein belongs to the KdpA family. The system is composed of three essential subunits: KdpA, KdpB and KdpC.

Its subcellular location is the cell inner membrane. Its function is as follows. Part of the high-affinity ATP-driven potassium transport (or Kdp) system, which catalyzes the hydrolysis of ATP coupled with the electrogenic transport of potassium into the cytoplasm. This subunit binds the periplasmic potassium ions and delivers the ions to the membrane domain of KdpB through an intramembrane tunnel. The chain is Potassium-transporting ATPase potassium-binding subunit from Salmonella heidelberg (strain SL476).